A 333-amino-acid chain; its full sequence is Holliday junction branch migration complex subunit RuvB (333 aa).

The tract at residues methionine 1 to tyrosine 173 is large ATPase domain (RuvB-L). ATP-binding positions include leucine 11, arginine 12, glycine 53, lysine 56, threonine 57, threonine 58, glutamate 120–phenylalanine 122, arginine 163, tyrosine 173, and arginine 210. Residue threonine 57 participates in Mg(2+) binding. Residues threonine 174–glycine 244 are small ATPAse domain (RuvB-S). The segment at serine 247–asparagine 333 is head domain (RuvB-H). Residues arginine 302 and arginine 307 each contribute to the DNA site.

Belongs to the RuvB family. In terms of assembly, homohexamer. Forms an RuvA(8)-RuvB(12)-Holliday junction (HJ) complex. HJ DNA is sandwiched between 2 RuvA tetramers; dsDNA enters through RuvA and exits via RuvB. An RuvB hexamer assembles on each DNA strand where it exits the tetramer. Each RuvB hexamer is contacted by two RuvA subunits (via domain III) on 2 adjacent RuvB subunits; this complex drives branch migration. In the full resolvosome a probable DNA-RuvA(4)-RuvB(12)-RuvC(2) complex forms which resolves the HJ.

Its subcellular location is the cytoplasm. The enzyme catalyses ATP + H2O = ADP + phosphate + H(+). Its function is as follows. The RuvA-RuvB-RuvC complex processes Holliday junction (HJ) DNA during genetic recombination and DNA repair, while the RuvA-RuvB complex plays an important role in the rescue of blocked DNA replication forks via replication fork reversal (RFR). RuvA specifically binds to HJ cruciform DNA, conferring on it an open structure. The RuvB hexamer acts as an ATP-dependent pump, pulling dsDNA into and through the RuvAB complex. RuvB forms 2 homohexamers on either side of HJ DNA bound by 1 or 2 RuvA tetramers; 4 subunits per hexamer contact DNA at a time. Coordinated motions by a converter formed by DNA-disengaged RuvB subunits stimulates ATP hydrolysis and nucleotide exchange. Immobilization of the converter enables RuvB to convert the ATP-contained energy into a lever motion, pulling 2 nucleotides of DNA out of the RuvA tetramer per ATP hydrolyzed, thus driving DNA branch migration. The RuvB motors rotate together with the DNA substrate, which together with the progressing nucleotide cycle form the mechanistic basis for DNA recombination by continuous HJ branch migration. Branch migration allows RuvC to scan DNA until it finds its consensus sequence, where it cleaves and resolves cruciform DNA. The polypeptide is Holliday junction branch migration complex subunit RuvB (Deinococcus radiodurans (strain ATCC 13939 / DSM 20539 / JCM 16871 / CCUG 27074 / LMG 4051 / NBRC 15346 / NCIMB 9279 / VKM B-1422 / R1)).